The chain runs to 210 residues: T-cell surface glycoprotein CD8 beta chain (210 aa).

The signal sequence occupies residues 1–21 (MRPRLWLLLAAQLAVLHGSSV). Positions 22 to 132 (LQQTPAYIKV…ELTFGKGTQL (111 aa)) constitute an Ig-like V-type domain. Over 22–170 (LQQTPAYIKV…ETQKGPLCSP (149 aa)) the chain is Extracellular. A disulfide bridge links C41 with C116. N102 is a glycosylation site (N-linked (GlcNAc...) asparagine). The chain crosses the membrane as a helical span at residues 171-191 (ITLGLLVAGVLVLLVSLGVAI). The Cytoplasmic segment spans residues 192–210 (HLCCRRRRARLRFMKQFYK).

In terms of assembly, forms disulfide-linked heterodimers with CD8A at the cell surface. Interacts with CD3D; this interaction couples TCR-CD3 with CD8. Interacts with LCK. In terms of processing, phosphorylated as a consequence of T-cell activation. Palmitoylated at the cytoplasmic tail and thereby targets the heterodimer CD8A/CD8B to lipid rafts unlike CD8A homodimers.

The protein resides in the cell membrane. Its function is as follows. Integral membrane glycoprotein that plays an essential role in the immune response and serves multiple functions in responses against both external and internal offenses. In T-cells, functions primarily as a coreceptor for MHC class I molecule:peptide complex. The antigens presented by class I peptides are derived from cytosolic proteins while class II derived from extracellular proteins. Interacts simultaneously with the T-cell receptor (TCR) and the MHC class I proteins presented by antigen presenting cells (APCs). In turn, recruits the Src kinase LCK to the vicinity of the TCR-CD3 complex. A palmitoylation site in the cytoplasmic tail of CD8B chain contributes to partitioning of CD8 into the plasma membrane lipid rafts where signaling proteins are enriched. Once LCK recruited, it initiates different intracellular signaling pathways by phosphorylating various substrates ultimately leading to lymphokine production, motility, adhesion and activation of cytotoxic T-lymphocytes (CTLs). Additionally, plays a critical role in thymic selection of CD8+ T-cells. The protein is T-cell surface glycoprotein CD8 beta chain (CD8B) of Pongo pygmaeus (Bornean orangutan).